The chain runs to 168 residues: Phosphopantetheine adenylyltransferase (168 aa).

Residue threonine 13 coordinates substrate. Residues 13 to 14 and histidine 21 contribute to the ATP site; that span reads TF. Residues lysine 45, leucine 78, and arginine 92 each coordinate substrate. ATP contacts are provided by residues 93 to 95, glutamate 103, and 128 to 134; these read GLR and TQFISSG.

This sequence belongs to the bacterial CoaD family. In terms of assembly, homohexamer. It depends on Mg(2+) as a cofactor.

Its subcellular location is the cytoplasm. The enzyme catalyses (R)-4'-phosphopantetheine + ATP + H(+) = 3'-dephospho-CoA + diphosphate. Its pathway is cofactor biosynthesis; coenzyme A biosynthesis; CoA from (R)-pantothenate: step 4/5. Functionally, reversibly transfers an adenylyl group from ATP to 4'-phosphopantetheine, yielding dephospho-CoA (dPCoA) and pyrophosphate. In Wolbachia sp. subsp. Drosophila simulans (strain wRi), this protein is Phosphopantetheine adenylyltransferase.